The chain runs to 557 residues: Small ribosomal subunit protein bS1 (557 aa).

S1 motif domains follow at residues Gly-21 to Glu-87, Ala-105 to Arg-171, Gly-192 to Lys-260, and Gly-277 to Lys-347. Residues Lys-229, Lys-279, and Lys-363 each carry the N6-acetyllysine modification. S1 motif domains are found at residues Gly-364–Lys-434 and Gly-451–Arg-520.

This sequence belongs to the bacterial ribosomal protein bS1 family. In terms of assembly, part of the 30S ribosomal subunit. Some nascent polypeptide chains are able to cross-link to this protein in situ. Can be cross-linked to mRNA in the ribosome. Post-translationally, phosphorylated; probably on a serine.

Its function is as follows. Required for translation of most natural mRNAs except for leaderless mRNA. Binds mRNA upstream of the Shine-Dalgarno (SD) sequence and helps it bind to the 30S ribosomal subunit; acts as an RNA chaperone to unfold structured mRNA on the ribosome but is not essential for mRNAs with strong SDs and little 5'-UTR structure, thus it may help fine-tune which mRNAs that are translated. Unwinds dsRNA by binding to transiently formed ssRNA regions; binds about 10 nucleotides. Has a preference for polypyrimidine tracts. Negatively autoregulates its own translation. The polypeptide is Small ribosomal subunit protein bS1 (rpsA) (Escherichia coli O157:H7).